The chain runs to 773 residues: Preaspterpenacid I synthase sttA (773 aa).

A sesterterpenoid synthase region spans residues 4–359 (ISDVMKHCVP…RYHRTDLATT (356 aa)). Residue aspartate 105 coordinates Mg(2+). Aspartate 105 contacts substrate. The substrate stretch occupies residues 211–214 (RVNE). Residue asparagine 255 participates in substrate binding. Substrate stretches follow at residues 259–263 (SFPKE) and 350–351 (RY). The tract at residues 360–769 (AEDRATLIGK…RMMLLGMGPK (410 aa)) is geranylfarnesyl diphosphate synthase. The disordered stretch occupies residues 423-447 (AFKKRNSRNGKQNGTEGSKSTFTNG). The segment covering 431–447 (NGKQNGTEGSKSTFTNG) has biased composition (polar residues). Isopentenyl diphosphate-binding residues include lysine 493, arginine 496, and histidine 525. Mg(2+) is bound by residues aspartate 532 and aspartate 536. Arginine 541 lines the dimethylallyl diphosphate pocket. Isopentenyl diphosphate is bound at residue arginine 542. Dimethylallyl diphosphate contacts are provided by lysine 614, threonine 615, glutamine 652, asparagine 659, and lysine 669.

This sequence in the N-terminal section; belongs to the terpene synthase family. In the C-terminal section; belongs to the FPP/GGPP synthase family.

It carries out the reaction 4 isopentenyl diphosphate + dimethylallyl diphosphate = (2E,6E,10E,14E)-geranylfarnesyl diphosphate + 4 diphosphate. The catalysed reaction is (2E,6E,10E,14E)-geranylfarnesyl diphosphate + H2O = preaspterpenacid acid I + diphosphate. It functions in the pathway secondary metabolite biosynthesis; terpenoid biosynthesis. Sesterterpenoid synthase; part of the gene cluster that mediates the biosynthesis of aspterpenacids. Performs both prenyl transferase and terpene cyclase activity, converting isopentenyl diphosphate and dimethylallyl diphosphate into geranylfarnesyl diphosphate (GFPP) and then converting GFPP into preaspterpenacid I. C22-oxidative modification of preaspterpenacid I by the cytochrome P450 monooxygenase sttB then leads to preaspterpenacid II. It has still to be determined how preaspterpenacid II is further modified to produce aspterpenacids. The sequence is that of Preaspterpenacid I synthase sttA from Aspergillus terreus (strain NIH 2624 / FGSC A1156).